Consider the following 127-residue polypeptide: Small ribosomal subunit protein uS11 (127 aa).

It belongs to the universal ribosomal protein uS11 family. As to quaternary structure, part of the 30S ribosomal subunit. Interacts with proteins S7 and S18. Binds to IF-3.

Functionally, located on the platform of the 30S subunit, it bridges several disparate RNA helices of the 16S rRNA. Forms part of the Shine-Dalgarno cleft in the 70S ribosome. This is Small ribosomal subunit protein uS11 from Rickettsia prowazekii (strain Madrid E).